We begin with the raw amino-acid sequence, 157 residues long: uncharacterized protein (157 aa).

Residues 6 to 157 (HDELFQAIQQ…AFFNLWIKYM (152 aa)) form the HTH marR-type domain. The H-T-H motif DNA-binding region spans 66–89 (NSFLASRLHISKAAVSKAVHALLK).

It localises to the cytoplasm. This is an uncharacterized protein from Bacillus subtilis (strain 168).